We begin with the raw amino-acid sequence, 144 residues long: Large ribosomal subunit protein uL15 (144 aa).

The interval 1–53 (MRLNSLSPAEGAKHSAKRLGRGIGSGLGKTGGRGHKGQKSRTGGGVRRGFEGG) is disordered. Positions 21–31 (RGIGSGLGKTG) are enriched in gly residues.

It belongs to the universal ribosomal protein uL15 family. As to quaternary structure, part of the 50S ribosomal subunit.

In terms of biological role, binds to the 23S rRNA. In Glaesserella parasuis serovar 5 (strain SH0165) (Haemophilus parasuis), this protein is Large ribosomal subunit protein uL15.